We begin with the raw amino-acid sequence, 401 residues long: cAMP-dependent protein kinase type II-alpha regulatory subunit (401 aa).

Ser-2 carries the post-translational modification N-acetylserine. The tract at residues 2–135 (SHIQIPPGLT…RLQEACKDIL (134 aa)) is dimerization and phosphorylation. A phosphoserine mark is found at Ser-47, Ser-74, Ser-76, and Ser-96. A disordered region spans residues 61–83 (ESSAVPVIEEDGESDSDSEDADL). The span at 68 to 83 (IEEDGESDSDSEDADL) shows a compositional bias: acidic residues. 3',5'-cyclic AMP contacts are provided by residues 136–257 (LFKN…ESVP), Glu-205, Arg-214, 258–401 (LFKS…DPGQ), Glu-335, and Arg-344. Thr-212 is modified (phosphothreonine; by PDPK1). A phosphoserine mark is found at Ser-347 and Ser-392.

It belongs to the cAMP-dependent kinase regulatory chain family. In terms of assembly, the inactive form of the enzyme is composed of two regulatory chains and two catalytic chains. Activation by cAMP produces two active catalytic monomers and a regulatory dimer that binds four cAMP molecules. Interacts with AKAP4. Interacts with CBFA2T3. Interacts with the phosphorylated form of PJA2. Interacts with MYRIP. This interaction may link PKA to components of the exocytosis machinery, thus facilitating exocytosis, including insulin release. Forms a complex composed of PRKAR2A, GSK3B and GSKIP through GSKIP interaction; facilitates PKA-induced phosphorylation and regulates GSK3B activity. Interacts with ADCY8; inhibits adenylate cyclase activity through PKA phosphorylation. Post-translationally, phosphorylated by the activated catalytic chain. As to expression, four types of regulatory chains are found: I-alpha, I-beta, II-alpha, and II-beta. Their expression varies among tissues and is in some cases constitutive and in others inducible.

It is found in the cytoplasm. The protein localises to the cell membrane. Functionally, regulatory subunit of the cAMP-dependent protein kinases involved in cAMP signaling in cells. Type II regulatory chains mediate membrane association by binding to anchoring proteins, including the MAP2 kinase. In Mus musculus (Mouse), this protein is cAMP-dependent protein kinase type II-alpha regulatory subunit (Prkar2a).